Reading from the N-terminus, the 363-residue chain is L-serine dehydratase/L-threonine deaminase (363 aa).

A2 carries the post-translational modification N-acetylalanine. At K41 the chain carries N6-(pyridoxal phosphate)lysine. Residues 74-98 (RGRSHSGDEQPHVRSQALLPDTPSP) form a disordered region. Position 164 (P164) interacts with pyridoxal 5'-phosphate.

The protein belongs to the serine/threonine dehydratase family. As to quaternary structure, homodimer. It depends on pyridoxal 5'-phosphate as a cofactor. Predominantly expressed in the periportal regions of the liver.

The protein localises to the cytoplasm. It catalyses the reaction L-serine = pyruvate + NH4(+). The catalysed reaction is L-threonine = 2-oxobutanoate + NH4(+). The protein operates within carbohydrate biosynthesis; gluconeogenesis. Functionally, catalyzes the pyridoxal-phosphate-dependent dehydrative deamination of L-threonine and L-serine to ammonia and alpha-ketobutyrate and pyruvate, respectively. This Rattus norvegicus (Rat) protein is L-serine dehydratase/L-threonine deaminase (Sds).